A 210-amino-acid polypeptide reads, in one-letter code: Imidazole glycerol phosphate synthase subunit HisH (210 aa).

In terms of domain architecture, Glutamine amidotransferase type-1 spans 3–210 (KVALLDYGSG…QLLRNWIDLL (208 aa)). Cys81 acts as the Nucleophile in catalysis. Residues His191 and Glu193 contribute to the active site.

In terms of assembly, heterodimer of HisH and HisF.

The protein localises to the cytoplasm. It carries out the reaction 5-[(5-phospho-1-deoxy-D-ribulos-1-ylimino)methylamino]-1-(5-phospho-beta-D-ribosyl)imidazole-4-carboxamide + L-glutamine = D-erythro-1-(imidazol-4-yl)glycerol 3-phosphate + 5-amino-1-(5-phospho-beta-D-ribosyl)imidazole-4-carboxamide + L-glutamate + H(+). The catalysed reaction is L-glutamine + H2O = L-glutamate + NH4(+). Its pathway is amino-acid biosynthesis; L-histidine biosynthesis; L-histidine from 5-phospho-alpha-D-ribose 1-diphosphate: step 5/9. In terms of biological role, IGPS catalyzes the conversion of PRFAR and glutamine to IGP, AICAR and glutamate. The HisH subunit catalyzes the hydrolysis of glutamine to glutamate and ammonia as part of the synthesis of IGP and AICAR. The resulting ammonia molecule is channeled to the active site of HisF. This Corynebacterium diphtheriae (strain ATCC 700971 / NCTC 13129 / Biotype gravis) protein is Imidazole glycerol phosphate synthase subunit HisH.